Here is a 35-residue protein sequence, read N- to C-terminus: Small toxic polypeptide LdrA (35 aa).

The helical transmembrane segment at 8 to 28 (MIFWHDLAAPILAGIITAAIV) threads the bilayer.

The protein belongs to the Ldr toxic peptide family.

The protein resides in the cell inner membrane. In terms of biological role, toxic component of a type I toxin-antitoxin (TA) system. Inhibits ATP synthesis possibly due to its insertion in the cell inner membrane, ATP levels drop over 50% 2 minutes after induction. Overexpression is toxic leading to cell death, it inhibits cell growth within 30 minutes; C-terminally tagged versions of the protein are toxic while N-terminally tagged versions are not. The protein is Small toxic polypeptide LdrA (ldrA) of Escherichia coli (strain K12).